The sequence spans 378 residues: Ribosomal RNA large subunit methyltransferase G (378 aa).

The protein belongs to the methyltransferase superfamily. RlmG family.

It is found in the cytoplasm. It catalyses the reaction guanosine(1835) in 23S rRNA + S-adenosyl-L-methionine = N(2)-methylguanosine(1835) in 23S rRNA + S-adenosyl-L-homocysteine + H(+). In terms of biological role, specifically methylates the guanine in position 1835 (m2G1835) of 23S rRNA. This chain is Ribosomal RNA large subunit methyltransferase G, found in Salmonella arizonae (strain ATCC BAA-731 / CDC346-86 / RSK2980).